The sequence spans 409 residues: Imidazolonepropionase (409 aa).

The Fe(3+) site is built by H78 and H80. H78 and H80 together coordinate Zn(2+). 3 residues coordinate 4-imidazolone-5-propanoate: R87, Y150, and H183. Y150 lines the N-formimidoyl-L-glutamate pocket. Fe(3+) is bound at residue H248. Zn(2+) is bound at residue H248. Residue Q251 coordinates 4-imidazolone-5-propanoate. Residue D323 coordinates Fe(3+). D323 is a binding site for Zn(2+). Positions 325 and 327 each coordinate N-formimidoyl-L-glutamate. T328 lines the 4-imidazolone-5-propanoate pocket.

Belongs to the metallo-dependent hydrolases superfamily. HutI family. Zn(2+) is required as a cofactor. The cofactor is Fe(3+).

The protein localises to the cytoplasm. The catalysed reaction is 4-imidazolone-5-propanoate + H2O = N-formimidoyl-L-glutamate. It functions in the pathway amino-acid degradation; L-histidine degradation into L-glutamate; N-formimidoyl-L-glutamate from L-histidine: step 3/3. Functionally, catalyzes the hydrolytic cleavage of the carbon-nitrogen bond in imidazolone-5-propanoate to yield N-formimidoyl-L-glutamate. It is the third step in the universal histidine degradation pathway. This is Imidazolonepropionase from Mesorhizobium japonicum (strain LMG 29417 / CECT 9101 / MAFF 303099) (Mesorhizobium loti (strain MAFF 303099)).